A 598-amino-acid chain; its full sequence is Elongation factor 4 2 (598 aa).

The region spanning 2 to 184 (KHIRNFCIIA…GIVKNLPAPK (183 aa)) is the tr-type G domain. GTP-binding positions include 14–19 (DHGKST) and 131–134 (NKID).

It belongs to the TRAFAC class translation factor GTPase superfamily. Classic translation factor GTPase family. LepA subfamily.

The protein localises to the cell inner membrane. The catalysed reaction is GTP + H2O = GDP + phosphate + H(+). In terms of biological role, required for accurate and efficient protein synthesis under certain stress conditions. May act as a fidelity factor of the translation reaction, by catalyzing a one-codon backward translocation of tRNAs on improperly translocated ribosomes. Back-translocation proceeds from a post-translocation (POST) complex to a pre-translocation (PRE) complex, thus giving elongation factor G a second chance to translocate the tRNAs correctly. Binds to ribosomes in a GTP-dependent manner. This Rhodopirellula baltica (strain DSM 10527 / NCIMB 13988 / SH1) protein is Elongation factor 4 2.